Consider the following 147-residue polypeptide: D-aminoacyl-tRNA deacylase (147 aa).

The Gly-cisPro motif, important for rejection of L-amino acids motif lies at Gly-136–Pro-137.

Belongs to the DTD family. Homodimer.

It localises to the cytoplasm. The catalysed reaction is glycyl-tRNA(Ala) + H2O = tRNA(Ala) + glycine + H(+). The enzyme catalyses a D-aminoacyl-tRNA + H2O = a tRNA + a D-alpha-amino acid + H(+). An aminoacyl-tRNA editing enzyme that deacylates mischarged D-aminoacyl-tRNAs. Also deacylates mischarged glycyl-tRNA(Ala), protecting cells against glycine mischarging by AlaRS. Acts via tRNA-based rather than protein-based catalysis; rejects L-amino acids rather than detecting D-amino acids in the active site. By recycling D-aminoacyl-tRNA to D-amino acids and free tRNA molecules, this enzyme counteracts the toxicity associated with the formation of D-aminoacyl-tRNA entities in vivo and helps enforce protein L-homochirality. This chain is D-aminoacyl-tRNA deacylase, found in Streptococcus agalactiae serotype Ia (strain ATCC 27591 / A909 / CDC SS700).